A 433-amino-acid chain; its full sequence is L-lysine 2,3-aminomutase (433 aa).

In terms of domain architecture, Radical SAM core spans 122 to 334 (HRYPDRVLFY…SLIGHTTGFA (213 aa)). Cys136, Cys140, and Cys143 together coordinate [4Fe-4S] cluster. Cys279 lines the Zn(2+) pocket. Lys348 is modified (N6-(pyridoxal phosphate)lysine). Cys389, Cys392, and Cys396 together coordinate Zn(2+).

This sequence belongs to the radical SAM superfamily. KamA family. [4Fe-4S] cluster is required as a cofactor. Requires pyridoxal 5'-phosphate as cofactor. The cofactor is Zn(2+).

The catalysed reaction is L-lysine = (3S)-3,6-diaminohexanoate. Functionally, catalyzes the interconversion of L-alpha-lysine and L-beta-lysine. Is involved in the biosynthesis pathway of N6-acetyl-beta-lysine, a compatible solute produced by methanogenic archaea that helps cells to cope with salt stress. In Methanococcus maripaludis (strain DSM 14266 / JCM 13030 / NBRC 101832 / S2 / LL), this protein is L-lysine 2,3-aminomutase (ablA).